We begin with the raw amino-acid sequence, 79 residues long: Cyclin-dependent kinases regulatory subunit 2 (79 aa).

The protein belongs to the CKS family. Forms a homohexamer that can probably bind six kinase subunits.

In terms of biological role, binds to the catalytic subunit of the cyclin dependent kinases and is essential for their biological function. This Xenopus laevis (African clawed frog) protein is Cyclin-dependent kinases regulatory subunit 2 (cks2).